The sequence spans 122 residues: uncharacterized protein (122 aa).

4 helical membrane passes run 7–27 (IVAI…IFCD), 29–49 (LVLA…LGWI), 62–82 (AITG…SKNP), and 89–109 (KEIF…YFGY).

Its subcellular location is the cell membrane. This is an uncharacterized protein from Methanocaldococcus jannaschii (strain ATCC 43067 / DSM 2661 / JAL-1 / JCM 10045 / NBRC 100440) (Methanococcus jannaschii).